Reading from the N-terminus, the 121-residue chain is MRLSYVIVVIATSFLVTTEALSTNTGVQAANVVGPAQRLLRKHYTAAENDDDSEARALNTEKMKTMLKAGMTVDDYAAKLKLTDKIAAAANSARAMEKLGETLKMKKLLRYLNYVAEHTAV.

An N-terminal signal peptide occupies residues 1-20; it reads MRLSYVIVVIATSFLVTTEA. Residues 38–56 carry the RxLR-dEER motif; the sequence is RLLRKHYTAAENDDDSEAR. The tract at residues 57–121 is WY domain; sequence ALNTEKMKTM…LNYVAEHTAV (65 aa).

This sequence belongs to the RxLR effector family. As to quaternary structure, homodimer. Interacts with host MAPKKK epsilon (via its kinase domain).

The protein resides in the secreted. It is found in the host cytoplasm. The protein localises to the host nucleus. Effector that enhances P.infestans colonization of Nicotiana benthamiana leaves. Induces a weak Cell death response in N.benthamiana. PexRD2-induced cell death is dependent on SGT1, suggesting that PexRD2 is recognized by the plant immune system. Interacts with the kinase domain of the host MAPKKK epsilon, a positive regulator of cell death associated with plant immunity, and perturbs signaling pathways triggered by MAPKKK epsilon. This is RxLR effector protein PexRD2 from Phytophthora infestans (strain T30-4) (Potato late blight agent).